The sequence spans 77 residues: Immune protein Tis1 (77 aa).

In terms of biological role, immunity protein that plays a role in preventing early activation of toxin Tas1. The sequence is that of Immune protein Tis1 (tis1) from Pseudomonas aeruginosa (strain UCBPP-PA14).